The sequence spans 950 residues: Protocadherin alpha-13 (950 aa).

Residues 1-29 (MLSSWQGGPRPRQLLLWLLILAAWETGSG) form the signal peptide. Over 30–697 (QLHYSVPEEA…GPEAALVDVN (668 aa)) the chain is Extracellular. Cadherin domains are found at residues 34–133 (SVPE…PPIF), 134–242 (PESK…APEF), 243–350 (YQSV…APEV), 351–455 (TITS…APAF), 456–565 (AQPE…APAL), and 581–678 (MPRS…APQA). Residues N257 and N265 are each glycosylated (N-linked (GlcNAc...) asparagine). N-linked (GlcNAc...) asparagine glycosylation occurs at N548. Residues 698-718 (VYLIIAICAVSSLLVLTLLLY) traverse the membrane as a helical segment. Residues 719 to 950 (TALRCSAPPT…GNSTTDNSDQ (232 aa)) are Cytoplasmic-facing. PXXP repeat units lie at residues 734–737 (PGKP), 774–777 (PSLP), 799–802 (PRQP), 832–835 (PGGP), 873–876 (PGNP), and 891–894 (PGSP). The tract at residues 734–894 (PGKPTLVCSS…PDKFIIPGSP (161 aa)) is 6 X 4 AA repeats of P-X-X-P. 2 disordered regions span residues 780 to 806 (LGSAEGTGQREEDSECLKEPRQPNPDW) and 829 to 950 (RAGP…NSDQ). Residues 787-800 (GQREEDSECLKEPR) are compositionally biased toward basic and acidic residues. A compositionally biased stretch (basic and acidic residues) spans 909–923 (DKSDFITFGKKEETK).

Its subcellular location is the cell membrane. Functionally, potential calcium-dependent cell-adhesion protein. May be involved in the establishment and maintenance of specific neuronal connections in the brain. The protein is Protocadherin alpha-13 (PCDHA13) of Homo sapiens (Human).